The primary structure comprises 476 residues: MARYETVIGVEVHAQLKTKSKIFCSCSTRFGVDPNENVCPVCSGMPGVLPVLNATVVEYAAKMGLATGCVVNPVSVFARKNYFYPDLPKGYQTSQFEQPICEHGHVDITVDGTAKRIGITRIHMEEDAGKNIHSAADNLSYVDLNRACVPLIEIVSEPDMRGPEEVVAYLKALRAILVYLDVCDGNMEEGSFRCDANVSLRPVGQAEFGTRAELKNLNSFRHVQKAIEYEVERQADILDDGGKVIQETRLYDAAKNTTASMRGKEEAHDYRYFPDPDLVPVRIEAATLDKWRAELPELPEARRARFVADFGLSDYDAEVLTAERDMAEYFEAAVAAGADPKKAANWMQSELLRELNQAGVAARDAKLTPEKLASLVKLIDSGEISGKIAKQIFPDLFAQGLDPADYVRQKGLSQISDSNALESAVEAVLAANPAEVEAFRGGKTKLMGFFVGQIMKATKGQANPGLVNELLQKKLG.

Belongs to the GatB/GatE family. GatB subfamily. In terms of assembly, heterotrimer of A, B and C subunits.

It carries out the reaction L-glutamyl-tRNA(Gln) + L-glutamine + ATP + H2O = L-glutaminyl-tRNA(Gln) + L-glutamate + ADP + phosphate + H(+). The enzyme catalyses L-aspartyl-tRNA(Asn) + L-glutamine + ATP + H2O = L-asparaginyl-tRNA(Asn) + L-glutamate + ADP + phosphate + 2 H(+). Allows the formation of correctly charged Asn-tRNA(Asn) or Gln-tRNA(Gln) through the transamidation of misacylated Asp-tRNA(Asn) or Glu-tRNA(Gln) in organisms which lack either or both of asparaginyl-tRNA or glutaminyl-tRNA synthetases. The reaction takes place in the presence of glutamine and ATP through an activated phospho-Asp-tRNA(Asn) or phospho-Glu-tRNA(Gln). The protein is Aspartyl/glutamyl-tRNA(Asn/Gln) amidotransferase subunit B of Solidesulfovibrio magneticus (strain ATCC 700980 / DSM 13731 / RS-1) (Desulfovibrio magneticus).